The sequence spans 282 residues: Parvulin-like PPIase (282 aa).

The N-terminal stretch at 1 to 20 is a signal peptide; the sequence is MKKLSVIFLSVSMLSGIAFA. One can recognise a PpiC domain in the interval 138-231; that stretch reads KEQIKVAHIL…FGWHIIKVLE (94 aa).

This sequence belongs to the PpiC/parvulin rotamase family.

Its subcellular location is the cell outer membrane. It carries out the reaction [protein]-peptidylproline (omega=180) = [protein]-peptidylproline (omega=0). The polypeptide is Parvulin-like PPIase (plp) (Rickettsia felis (strain ATCC VR-1525 / URRWXCal2) (Rickettsia azadi)).